A 330-amino-acid chain; its full sequence is Serine/threonine-protein phosphatase beta isoform (330 aa).

Mn(2+) contacts are provided by Asp-63, His-65, Asp-91, and Asn-123. Residue His-124 is the Proton donor of the active site. 2 residues coordinate Mn(2+): His-172 and His-247. The segment covering 308–319 (GMNSSRPTTPQR) has biased composition (polar residues). The interval 308-330 (GMNSSRPTTPQRSAPMLATNKKK) is disordered. Phosphothreonine is present on residues Thr-315 and Thr-316.

It belongs to the PPP phosphatase family. PP-1 subfamily. In terms of assembly, interacts with Nop17l. Interacts with uri; uri inhibits flw phosphatase activity. It depends on Mn(2+) as a cofactor.

It catalyses the reaction O-phospho-L-seryl-[protein] + H2O = L-seryl-[protein] + phosphate. It carries out the reaction O-phospho-L-threonyl-[protein] + H2O = L-threonyl-[protein] + phosphate. In terms of biological role, required for cell adhesion in non-muscle tissues and in maintenance of muscle attachment. Vital for larval development. This chain is Serine/threonine-protein phosphatase beta isoform (flw), found in Drosophila melanogaster (Fruit fly).